The sequence spans 751 residues: Semaphorin-3C (751 aa).

A signal peptide spans 1–21 (MAFQAVCILVGVFVCSTYVKG). In terms of domain architecture, Sema spans 28 to 511 (RVYLTFDELR…SNEGLAQVSL (484 aa)). Asparagine 81 is a glycosylation site (N-linked (GlcNAc...) asparagine). A disulfide bridge links cysteine 101 with cysteine 112. Asparagine 123 carries an N-linked (GlcNAc...) asparagine glycan. 3 disulfides stabilise this stretch: cysteine 130/cysteine 139, cysteine 266/cysteine 378, and cysteine 290/cysteine 338. An N-linked (GlcNAc...) asparagine glycan is attached at asparagine 268. A glycan (N-linked (GlcNAc...) asparagine) is linked at asparagine 465. A disulfide bridge connects residues cysteine 514 and cysteine 532. An Ig-like C2-type domain is found at 571–655 (AYRNAAEIVQ…TENSFKQTIA (85 aa)). N-linked (GlcNAc...) asparagine glycans are attached at residues asparagine 585 and asparagine 586. Cysteine 592 and cysteine 643 are disulfide-bonded. Basic and acidic residues predominate over residues 712–731 (TRQQHQQGEESQKMRGDYGK). Residues 712–751 (TRQQHQQGEESQKMRGDYGKLKALINSRKSRNRRNQLPES) form a disordered region.

The protein belongs to the semaphorin family. In terms of assembly, interacts with PLXND1.

It localises to the secreted. Its function is as follows. Binds to plexin family members and plays an important role in the regulation of developmental processes. Required for normal cardiovascular development during embryogenesis. Functions as attractant for growing axons, and thereby plays an important role in axon growth and axon guidance. The chain is Semaphorin-3C (SEMA3C) from Bos taurus (Bovine).